Reading from the N-terminus, the 101-residue chain is Small ribosomal subunit protein uS14 (101 aa).

Residues 33 to 69 (SQDASYEEKIDASTKLQKLPRDSSPSRHRNRCELSGR) form a disordered region. The segment covering 51 to 68 (LPRDSSPSRHRNRCELSG) has biased composition (basic and acidic residues).

It belongs to the universal ribosomal protein uS14 family. Part of the 30S ribosomal subunit. Contacts proteins S3 and S10.

In terms of biological role, binds 16S rRNA, required for the assembly of 30S particles and may also be responsible for determining the conformation of the 16S rRNA at the A site. This Xanthomonas axonopodis pv. citri (strain 306) protein is Small ribosomal subunit protein uS14.